Consider the following 298-residue polypeptide: uncharacterized protein (298 aa).

Helical transmembrane passes span Ile5–Thr23, Ile33–Phe52, Ala72–Trp91, Val101–Phe120, Phe127–Leu145, Leu149–Ile166, Leu175–Leu194, Phe207–Ala229, Leu238–Ile260, and Tyr265–Tyr284. In terms of domain architecture, EamA spans Phe13–Val144.

This sequence belongs to the EamA transporter family.

It localises to the cell membrane. This is an uncharacterized protein from Haemophilus influenzae (strain ATCC 51907 / DSM 11121 / KW20 / Rd).